The following is a 230-amino-acid chain: Ureidoacrylate amidohydrolase RutB (230 aa).

D24 (proton acceptor) is an active-site residue. K133 is an active-site residue. Residue C166 is the Nucleophile of the active site.

This sequence belongs to the isochorismatase family. RutB subfamily.

The catalysed reaction is (Z)-3-ureidoacrylate + H2O + H(+) = (Z)-3-aminoacrylate + NH4(+) + CO2. It carries out the reaction (Z)-3-ureidoacrylate + H2O = (Z)-3-aminoacrylate + carbamate + H(+). The enzyme catalyses (Z)-2-methylureidoacrylate + H2O + H(+) = (Z)-2-methylaminoacrylate + NH4(+) + CO2. In terms of biological role, hydrolyzes ureidoacrylate to form aminoacrylate and carbamate. The carbamate hydrolyzes spontaneously, thereby releasing one of the nitrogen atoms of the pyrimidine ring as ammonia and one of its carbon atoms as CO2. This is Ureidoacrylate amidohydrolase RutB from Escherichia coli O7:K1 (strain IAI39 / ExPEC).